Consider the following 83-residue polypeptide: Conotoxin MiEr92 (83 aa).

The signal sequence occupies residues 1-22 (MKLTCVLIVIMLFLTVCPLITA). A propeptide spanning residues 23-49 (DHSRDKQEHPAMRLKDRIRYLRRGKLT) is cleaved from the precursor. Cystine bridges form between C52-C67, C59-C72, and C66-C81.

Belongs to the conotoxin O1 superfamily. Expressed by the venom duct.

It is found in the secreted. The polypeptide is Conotoxin MiEr92 (Conus miles (Soldier cone)).